We begin with the raw amino-acid sequence, 223 residues long: PRA1 family protein B5 (223 aa).

Helical transmembrane passes span 83–103 (SSYFRVNYVCIVALILGFSLL), 105–125 (HPFSLILLLCLAASWLFLYLF), 146–166 (GGLILSTIAVIFFTSVGSVLI), 170–190 (MIGIATICVHGAFRAPDDLFL), and 196–216 (AASGFLSFIGVPAIPSVAPSA).

It belongs to the PRA1 family. As to quaternary structure, interacts with PRA1B1, PRA1B2, PRA1B3, PRA1B4, PRA1B6 and PRA1E. Expressed in roots, lateral roots, lateral root caps, columella cells, leaves, and shoot apex.

It localises to the endosome membrane. Functionally, may be involved in both secretory and endocytic intracellular trafficking in the endosomal/prevacuolar compartments. The protein is PRA1 family protein B5 (PRA1B5) of Arabidopsis thaliana (Mouse-ear cress).